The following is a 229-amino-acid chain: UPF0758 protein Caur_3603 (229 aa).

Residues 105-227 enclose the MPN domain; the sequence is PIRSPADVAT…YVSLRERGLG (123 aa). The Zn(2+) site is built by His-176, His-178, and Asp-189. Residues 176-189 carry the JAMM motif motif; the sequence is HNHPSGEPTPSMED.

The protein belongs to the UPF0758 family.

The chain is UPF0758 protein Caur_3603 from Chloroflexus aurantiacus (strain ATCC 29366 / DSM 635 / J-10-fl).